A 284-amino-acid chain; its full sequence is 4-hydroxybenzoate octaprenyltransferase (284 aa).

7 consecutive transmembrane segments (helical) span residues 33 to 53 (VIAA…LGVF), 93 to 113 (IGLF…MNPL), 136 to 156 (YLPQ…AWAA), 159 to 179 (GELP…TIAY), 209 to 229 (LVIG…GQHY), 231 to 248 (LGQS…LFVY), and 264 to 284 (AFLN…IAFW).

This sequence belongs to the UbiA prenyltransferase family. Mg(2+) is required as a cofactor.

Its subcellular location is the cell inner membrane. It carries out the reaction all-trans-octaprenyl diphosphate + 4-hydroxybenzoate = 4-hydroxy-3-(all-trans-octaprenyl)benzoate + diphosphate. It functions in the pathway cofactor biosynthesis; ubiquinone biosynthesis. Functionally, catalyzes the prenylation of para-hydroxybenzoate (PHB) with an all-trans polyprenyl group. Mediates the second step in the final reaction sequence of ubiquinone-8 (UQ-8) biosynthesis, which is the condensation of the polyisoprenoid side chain with PHB, generating the first membrane-bound Q intermediate 3-octaprenyl-4-hydroxybenzoate. This chain is 4-hydroxybenzoate octaprenyltransferase, found in Vibrio campbellii (strain ATCC BAA-1116).